The following is a 345-amino-acid chain: S-adenosylmethionine:tRNA ribosyltransferase-isomerase (345 aa).

The protein belongs to the QueA family. Monomer.

It is found in the cytoplasm. It carries out the reaction 7-aminomethyl-7-carbaguanosine(34) in tRNA + S-adenosyl-L-methionine = epoxyqueuosine(34) in tRNA + adenine + L-methionine + 2 H(+). It functions in the pathway tRNA modification; tRNA-queuosine biosynthesis. Its function is as follows. Transfers and isomerizes the ribose moiety from AdoMet to the 7-aminomethyl group of 7-deazaguanine (preQ1-tRNA) to give epoxyqueuosine (oQ-tRNA). The sequence is that of S-adenosylmethionine:tRNA ribosyltransferase-isomerase from Acinetobacter baumannii (strain ATCC 17978 / DSM 105126 / CIP 53.77 / LMG 1025 / NCDC KC755 / 5377).